The sequence spans 301 residues: MPGIKEIRTKIKSVQNTRKITKAMEMVAASKMRKAQERMRAGRPYANKVREIAAHLMQANPEYNHPYLQQREIKAVGVVLVTTDKGLCGGLNTNISRLTLNRFKDFEAQNIQVRATAFGNKGLGLLTRIGTKLVSQETQLGDKPDLDRLLGAIKVQLDDYLEGRIDALYVATTRFVNTMKQEPVFLRLLPLASGLNDPFQSGLEHLESTTEVKSDYGWDYIYEPDAKSVIDDLLQRYVEGLLYQAVAENMASEQSARMVAMKAASDNAKKVIGELQLVYNKTRQAAITKEISEIVGGAAAV.

Belongs to the ATPase gamma chain family. In terms of assembly, F-type ATPases have 2 components, CF(1) - the catalytic core - and CF(0) - the membrane proton channel. CF(1) has five subunits: alpha(3), beta(3), gamma(1), delta(1), epsilon(1). CF(0) has three main subunits: a, b and c.

The protein resides in the cell inner membrane. Its function is as follows. Produces ATP from ADP in the presence of a proton gradient across the membrane. The gamma chain is believed to be important in regulating ATPase activity and the flow of protons through the CF(0) complex. This Bordetella avium (strain 197N) protein is ATP synthase gamma chain.